The sequence spans 333 residues: tRNA N6-adenosine threonylcarbamoyltransferase (333 aa).

Fe cation is bound by residues His111 and His115. Substrate contacts are provided by residues 134–138 (LVSGG), Asp167, Gly180, and Asn272. Fe cation is bound at residue Asp300.

The protein belongs to the KAE1 / TsaD family. Requires Fe(2+) as cofactor.

It is found in the cytoplasm. It carries out the reaction L-threonylcarbamoyladenylate + adenosine(37) in tRNA = N(6)-L-threonylcarbamoyladenosine(37) in tRNA + AMP + H(+). Functionally, required for the formation of a threonylcarbamoyl group on adenosine at position 37 (t(6)A37) in tRNAs that read codons beginning with adenine. Is involved in the transfer of the threonylcarbamoyl moiety of threonylcarbamoyl-AMP (TC-AMP) to the N6 group of A37, together with TsaE and TsaB. TsaD likely plays a direct catalytic role in this reaction. This Legionella pneumophila (strain Paris) protein is tRNA N6-adenosine threonylcarbamoyltransferase.